The chain runs to 389 residues: Meiosis-specific protein MEI4 (389 aa).

The interaction with REC114 stretch occupies residues 1-127; it reads MDIQPWYLKT…LSQHFVESTD (127 aa).

Belongs to the MEI4L family. Part of the MCD recombinosome complex, at least composed of IHO1, REC114 and MEI4. Forms a complex with REC114; the interaction is required for MEI4 stability. Interacts (via N-terminal domain) with REC114 (via C-terminal domain). Interacts with IHO1. Expressed in adult testis and brain and in embryonic ovary.

The protein resides in the chromosome. In terms of biological role, required for DNA double-strand breaks (DSBs) formation in unsynapsed regions during meiotic recombination. Probably acts by forming a complex with IHO1 and REC114, which activates DSBs formation in unsynapsed regions, an essential step to ensure completion of synapsis. The sequence is that of Meiosis-specific protein MEI4 from Mus musculus (Mouse).